The chain runs to 268 residues: Tryptophan synthase alpha chain (268 aa).

Active-site proton acceptor residues include glutamate 49 and aspartate 60.

This sequence belongs to the TrpA family. Tetramer of two alpha and two beta chains.

It carries out the reaction (1S,2R)-1-C-(indol-3-yl)glycerol 3-phosphate + L-serine = D-glyceraldehyde 3-phosphate + L-tryptophan + H2O. It functions in the pathway amino-acid biosynthesis; L-tryptophan biosynthesis; L-tryptophan from chorismate: step 5/5. In terms of biological role, the alpha subunit is responsible for the aldol cleavage of indoleglycerol phosphate to indole and glyceraldehyde 3-phosphate. This Aliivibrio fischeri (strain MJ11) (Vibrio fischeri) protein is Tryptophan synthase alpha chain.